The sequence spans 297 residues: MNQASLYQHANQVQRHDAKLILDEFASTMQWRSDGEDALLDVGSGSGNVLMDFVKPLLPIRGQLVGTDISSQMVHYASKHYQREERTRFQVLDIGCERLPEELSGRFDHVTSFYCLHWVQNLKGALGNIYNLLKPEGGDCLLAFLASNPVYEVYKILKTNDKWSTFMQDVENFISPLHYSLSPGEEFSQLLNDVGFVQHNVEIRNEVFVYEGVRTLKDNVKAICPFLERMPADLHEQFLDDFIDIVISMNLQQGENNEDQKFLSPYKLVVAYARKTPEFVNNVFLEPTHQNLVKGIN.

The protein belongs to the methyltransferase superfamily. In terms of tissue distribution, predominantly expressed in corpora allata. Also expressed at low level in testis.

It catalyses the reaction (2E,6E)-farnesoate + S-adenosyl-L-methionine = methyl (2E,6E)-farnesoate + S-adenosyl-L-homocysteine. It carries out the reaction juvenile hormone III carboxylate + S-adenosyl-L-methionine = juvenile hormone III + S-adenosyl-L-homocysteine. In terms of biological role, O-methyltransferase that transfers a methyl group from S-adenosyl-L-methionine (SAM) to the carboxyl group of juvenile hormone acids to produce active juvenile hormones in the corpora allata, the last step during juvenile hormone biosynthesis. Also able to methylate farnesoate to methyl farnesoate. This Drosophila melanogaster (Fruit fly) protein is Juvenile hormone acid O-methyltransferase.